The following is a 1836-amino-acid chain: Druantia protein DruE (1836 aa).

The region spanning 108–405 (SFLGEDASDL…FAQDLTGLSP (298 aa)) is the Helicase ATP-binding domain. 121 to 128 (TGTGSGKT) contributes to the ATP binding site. Residues 347–350 (DEAH) carry the DEAH box motif. The 186-residue stretch at 1014 to 1199 (DCTALMPFAL…EVKVNNPKIA (186 aa)) folds into the Helicase C-terminal domain.

It is found in the cytoplasm. Component of antiviral defense system Druantia type I, composed of DruA, DruB, DruC, DruD and DruE. Expression of Druantia in E.coli (strain MG1655) confers resistance to phage lambda, SECphi18, SECphi27 and T4. This protein is probably a helicase. The chain is Druantia protein DruE from Escherichia coli (strain UMEA 4076-1).